Here is a 214-residue protein sequence, read N- to C-terminus: Outer-membrane lipoprotein LolB (214 aa).

Residues 1–25 (MNNLKRFTKSIFSCIALSGLLFLGG) form the signal peptide. C26 is lipidated: N-palmitoyl cysteine. A lipid anchor (S-diacylglycerol cysteine) is attached at C26.

The protein belongs to the LolB family. As to quaternary structure, monomer.

Its subcellular location is the cell outer membrane. Plays a critical role in the incorporation of lipoproteins in the outer membrane after they are released by the LolA protein. In Shewanella oneidensis (strain ATCC 700550 / JCM 31522 / CIP 106686 / LMG 19005 / NCIMB 14063 / MR-1), this protein is Outer-membrane lipoprotein LolB.